The following is an 861-amino-acid chain: Extra-large guanine nucleotide-binding protein 2 (861 aa).

Disordered stretches follow at residues 1–32 and 121–168; these read MAAV…TSSG and VSGS…DDRV. A compositionally biased stretch (basic and acidic residues) spans 131–143; that stretch reads KRLDVPEEVKSPA. Low complexity predominate over residues 146–156; the sequence is RLSPSSPLSAS. Basic and acidic residues predominate over residues 157 to 168; the sequence is AREEDHLDDDRV. The Nuclear localization signal signature appears at 204–211; sequence RAERKGKR. An RING-type; degenerate zinc finger spans residues 214 to 257; that stretch reads CYRCQLGNRFTEKEVCIVCDAKYCFNCVRRAMGAMPEGRKCQAC. The 393-residue stretch at 461-853 folds into the G-alpha domain; that stretch reads MLNKLLLIGS…TSMFQEMSTT (393 aa). The tract at residues 464–477 is G1 motif; that stretch reads KLLLIGSEKGGATT. 469–477 serves as a coordination point for GTP; it reads GSEKGGATT. Thr476 lines the Ca(2+) pocket. A disordered region spans residues 523–545; sequence EMSNDQSSGNVGDETSAKPGNSI. 624-632 lines the GTP pocket; the sequence is DILQAEGLS. The tract at residues 624 to 632 is G2 motif; the sequence is DILQAEGLS. Ser632 contributes to the Ca(2+) binding site. Residues 665 to 674 form a G3 motif region; it reads YQLIRLNPRS. Residues 737 to 744 are G4 motif; it reads LLVLTKFD. 741–744 is a binding site for GTP; it reads TKFD. A G5 motif region spans residues 818-823; that stretch reads QVSLES.

This sequence belongs to the G-alpha family. XLG subfamily. Interacts with GB1. Component of a G-protein complex at least composed of XLG2 and GB1. Interacts with RTV1. Ca(2+) serves as cofactor. Ubiquitous. Strongly expressed in vascular tissues, root and shoot meristems and lateral root primordia.

It localises to the nucleus. In terms of biological role, guanine nucleotide-binding proteins (G proteins) are involved as modulators or transducers in various transmembrane signaling systems. Binds GTP with specificity. Plays a role in the root morphogenesis by regulation of the cell proliferation. Acts as a positive regulator in resistance to pathogen that triggers the salicylic acid (SA) pathway. Promotes the DNA binding activity of RTV1 specifically to promoter regions of FT and SOC1 in vivo leading to the activation of floral integrator genes. The polypeptide is Extra-large guanine nucleotide-binding protein 2 (XLG2) (Arabidopsis thaliana (Mouse-ear cress)).